We begin with the raw amino-acid sequence, 319 residues long: Acetyl esterase (319 aa).

Residues 91–93 carry the Involved in the stabilization of the negatively charged intermediate by the formation of the oxyanion hole motif; it reads HGG. Residues Ser165, Asp262, and His292 contribute to the active site.

This sequence belongs to the 'GDXG' lipolytic enzyme family. As to quaternary structure, homodimer. Interacts with MalT and MelA.

Its subcellular location is the cytoplasm. Displays esterase activity towards short chain fatty esters (acyl chain length of up to 8 carbons). Able to hydrolyze triacetylglycerol (triacetin) and tributyrylglycerol (tributyrin), but not trioleylglycerol (triolein) or cholesterol oleate. Negatively regulates MalT activity by antagonizing maltotriose binding. Inhibits MelA galactosidase activity. The sequence is that of Acetyl esterase from Shigella flexneri serotype 5b (strain 8401).